The primary structure comprises 205 residues: Regulator of G-protein signaling 4 (205 aa).

S-palmitoyl cysteine attachment occurs at residues cysteine 2, cysteine 12, and cysteine 95. Residues 62–178 form the RGS domain; sequence SLENLINHEC…LKSRFYLDLT (117 aa).

Post-translationally, either Cys-2 or Cys-12 or both are palmitoylated. Phosphorylated by cyclic GMP-dependent protein kinase.

In terms of biological role, inhibits signal transduction by increasing the GTPase activity of G protein alpha subunits thereby driving them into their inactive GDP-bound form. Activity on G(z)-alpha is inhibited by phosphorylation of the G-protein. Activity on G(z)-alpha and G(i)-alpha-1 is inhibited by palmitoylation of the G-protein. This Rattus norvegicus (Rat) protein is Regulator of G-protein signaling 4 (Rgs4).